A 238-amino-acid polypeptide reads, in one-letter code: CD63 antigen (238 aa).

At 1-11 (MAVEGGMKCVK) the chain is on the cytoplasmic side. Residues 12–32 (FLLYVLLLAFCACAVGLIAIG) traverse the membrane as a helical segment. Topologically, residues 33-51 (VAVQVVLKQAITHETTAGS) are extracellular. The helical transmembrane segment at 52 to 72 (LLPVVIIAVGAFLFLVAFVGC) threads the bilayer. The Cytoplasmic portion of the chain corresponds to 73 to 81 (CGACKENYC). A helical transmembrane segment spans residues 82 to 102 (LMITFAIFLSLIMLVEVAVAI). The Extracellular segment spans residues 103–203 (AGYVFRDQVK…TIAIWLRKNI (101 aa)). Residues asparagine 116, asparagine 130, asparagine 150, and asparagine 172 are each glycosylated (N-linked (GlcNAc...) asparagine). Residues 204–224 (LLVAAAALGIAFVEVLGIIFS) traverse the membrane as a helical segment. The Cytoplasmic segment spans residues 225–238 (CCLVKSIRSGYEVM). The Lysosomal targeting motif motif lies at 234-238 (GYEVM).

It belongs to the tetraspanin (TM4SF) family. In terms of assembly, interacts with TIMP1 and ITGB1 and recruits TIMP1 to ITGB1. Interacts with CD9. Identified in a complex with CD9 and ITGB3. Interacts with PMEL. Interacts with KDR/VEGFR2; identified in a complex with ITGB1 and KDR/VEGFR2 and is required to recruit KDR to ITGB1 complexes. Interacts with SYT7. Palmitoylated at a low, basal level in unstimulated platelets. The level of palmitoylation increases when platelets are activated by thrombin (in vitro). Ubiquitous. Strongly expressed in kidney. Detected in spleen, bone marrow, peripheral blood mononuclear cells and macrophages.

The protein resides in the cell membrane. It localises to the lysosome membrane. It is found in the late endosome membrane. Its subcellular location is the endosome. The protein localises to the multivesicular body. The protein resides in the melanosome. It localises to the secreted. It is found in the extracellular exosome. Its subcellular location is the cell surface. Its function is as follows. Functions as a cell surface receptor for TIMP1 and plays a role in the activation of cellular signaling cascades. Plays a role in the activation of ITGB1 and integrin signaling, leading to the activation of AKT, FAK/PTK2 and MAP kinases. Promotes cell survival, reorganization of the actin cytoskeleton, cell adhesion, spreading and migration, via its role in the activation of AKT and FAK/PTK2. Plays a role in VEGFA signaling via its role in regulating the internalization of KDR/VEGFR2. Plays a role in intracellular vesicular transport processes, and is required for normal trafficking of the PMEL luminal domain that is essential for the development and maturation of melanocytes. Plays a role in the adhesion of leukocytes onto endothelial cells via its role in the regulation of SELP trafficking. May play a role in mast cell degranulation in response to Ms4a2/FceRI stimulation, but not in mast cell degranulation in response to other stimuli. The sequence is that of CD63 antigen (Cd63) from Mus musculus (Mouse).